We begin with the raw amino-acid sequence, 361 residues long: Phosphoribosylformylglycinamidine cyclo-ligase (361 aa).

It belongs to the AIR synthase family.

Its subcellular location is the cytoplasm. The catalysed reaction is 2-formamido-N(1)-(5-O-phospho-beta-D-ribosyl)acetamidine + ATP = 5-amino-1-(5-phospho-beta-D-ribosyl)imidazole + ADP + phosphate + H(+). It functions in the pathway purine metabolism; IMP biosynthesis via de novo pathway; 5-amino-1-(5-phospho-D-ribosyl)imidazole from N(2)-formyl-N(1)-(5-phospho-D-ribosyl)glycinamide: step 2/2. This chain is Phosphoribosylformylglycinamidine cyclo-ligase, found in Bartonella quintana (strain Toulouse) (Rochalimaea quintana).